A 1701-amino-acid chain; its full sequence is Merozoite surface protein 1 (1701 aa).

The first 19 residues, Met1–Cys19, serve as a signal peptide directing secretion. Residues Gly89–Gly100 show a composition bias toward gly residues. The interval Gly89–Thr118 is disordered. A compositionally biased stretch (low complexity) spans Asn101 to Thr116. Residues Asn110 and Asn239 are each glycosylated (N-linked (GlcNAc...) asparagine). The disordered stretch occupies residues Asp322 to Glu344. Residues Asn470, Asn536, and Asn607 are each glycosylated (N-linked (GlcNAc...) asparagine). Positions Ser704–Thr739 are disordered. The span at Glu724–Glu733 shows a compositional bias: acidic residues. N-linked (GlcNAc...) asparagine glycosylation is found at Asn802, Asn899, Asn919, Asn965, Asn991, Asn1089, and Asn1196. The segment covering Thr889 to Asn927 has biased composition (low complexity). The tract at residues Thr889–Ala936 is disordered. 2 disordered regions span residues Pro1231 to Pro1259 and Lys1451 to Lys1472. A compositionally biased stretch (polar residues) spans Val1245–Pro1259. Residues Ser1456–Pro1465 show a composition bias toward pro residues. The N-linked (GlcNAc...) asparagine glycan is linked to Asn1588. EGF-like domains lie at His1592–Pro1632 and Asn1633–Ser1680. Cystine bridges form between Cys1594/Cys1605, Cys1599/Cys1615, Cys1617/Cys1628, Cys1636/Cys1649, Cys1643/Cys1663, and Cys1665/Cys1679. Ser1680 is lipidated: GPI-anchor amidated serine. The propeptide at Ser1681–Ile1701 is removed in mature form.

Forms a complex composed of subunits p83, p30, p38, and p42 which remain non-covalently associated; the complex is formed at the merozoite surface prior to egress from host erythrocytes. Forms a complex composed of processed MSP1 subunits, MSP6 subunit p36 and MSP7; the complex is formed at the merozoite surface prior to egress from host erythrocytes. Within the complex, interacts (via subunit p38) with MSP6 subunit p36 and (via subunits p83, p30 and p38) with MSP7 (via subunit p22). Forms a complex composed of MSP1, MSP6, DBLMSP1 and DBLMSP2. Within the complex, interacts (via subunit p38) with DBLMSP1 and DBLMSP2. Forms a complex composed of MSP1, and rhoptry proteins RhopH3, RAP1 and CLAG9/RhopH3. Within the complex, interacts (via subunits p42 and p19) with RhopH3 (via C-terminus). Forms a complex composed of MSP1, MSP6, MSP7, MSP9 and MSP3; within the complex, MSP6 and MSP9 mediate the binding to the host erythrocyte. Interacts (via subunits p19 and p42) with MSP9; the interaction is direct; MSP1 subunits p19 or p42, and MSP9 form a co-ligand complex that interacts with host SLC4A1/Band 3 protein. May interact with PFD6. Interacts with host spectrin. As to quaternary structure, interacts with host glycophorin GYPA in a sialic acid-independent manner. In terms of assembly, interacts with host proinflammatory cytokine S100P; the interaction blocks S100P inflammatory and chemotactic activities. Interacts with host SLC4A1/Band 3 (via 5ABC region) on the host erythrocyte surface in a sialic acid-independent manner. Post-translationally, the p190 precursor is cleaved by SUB1 prior to merozoite egress into 4 subunits p83, p30, p38, and p42 which remain non-covalently associated. SUB1-mediated proteolytic cleavage occurs in an orderly manner; the first cleavage occurs at the p30/p38 site, followed by cleavage at the p83/p30 site, in the 3D7 strain a second cleavage occurs at the N-terminus of p83, the last cleavage occurs at the p38/p42 site. The order of cleavage is essential for parasite viability. SUB1-mediated processing is essential for merozoite egress. In a second processing step during erythrocyte invasion, p42 is cleaved by SUB2 into p33 and p19; the latter remains attached to the merozoite surface via its GPI-anchor and is endocytosed during the subsequent ring stage.

Its subcellular location is the cell membrane. It is found in the secreted. The protein localises to the vacuole membrane. Its function is as follows. During the asexual blood stage, involved in merozoite egress from host erythrocytes possibly via its interaction with the host cytoskeleton protein spectrin resulting in the destabilization of the host cytoskeleton and thus leading to erythrocyte cell membrane rupture. Involved in the binding to host erythrocytes and is required for host erythrocyte invasion. In terms of biological role, by binding to host proinflammatory cytokine S100P may interfere with host immune responses. Involved in merozoite invasion of host erythrocytes. May play a role in the biogenesis and/or function of the food vacuole during the intraerythrocytic development. In Plasmodium falciparum (isolate FC27 / Papua New Guinea), this protein is Merozoite surface protein 1.